A 145-amino-acid chain; its full sequence is Deoxyuridine 5'-triphosphate nucleotidohydrolase (145 aa).

Substrate-binding positions include 62–64 (RSG), asparagine 75, and 79–81 (TVD).

This sequence belongs to the dUTPase family. Mg(2+) serves as cofactor.

It catalyses the reaction dUTP + H2O = dUMP + diphosphate + H(+). It participates in pyrimidine metabolism; dUMP biosynthesis; dUMP from dCTP (dUTP route): step 2/2. Its function is as follows. This enzyme is involved in nucleotide metabolism: it produces dUMP, the immediate precursor of thymidine nucleotides and it decreases the intracellular concentration of dUTP so that uracil cannot be incorporated into DNA. The polypeptide is Deoxyuridine 5'-triphosphate nucleotidohydrolase (Gloeothece citriformis (strain PCC 7424) (Cyanothece sp. (strain PCC 7424))).